The chain runs to 95 residues: uncharacterized protein (95 aa).

This is an uncharacterized protein from Bacillus subtilis (strain 168).